The following is a 152-amino-acid chain: Ribosome maturation factor RimP (152 aa).

The protein belongs to the RimP family.

It is found in the cytoplasm. Required for maturation of 30S ribosomal subunits. This chain is Ribosome maturation factor RimP, found in Desulfitobacterium hafniense (strain DSM 10664 / DCB-2).